The following is a 124-amino-acid chain: Small ribosomal subunit protein uS13 (124 aa).

The tract at residues 95–124 (GLPVRGQRTKTNARTRKGPKRTIAGKKKAR) is disordered.

It belongs to the universal ribosomal protein uS13 family. Part of the 30S ribosomal subunit. Forms a loose heterodimer with protein S19. Forms two bridges to the 50S subunit in the 70S ribosome.

Its function is as follows. Located at the top of the head of the 30S subunit, it contacts several helices of the 16S rRNA. In the 70S ribosome it contacts the 23S rRNA (bridge B1a) and protein L5 of the 50S subunit (bridge B1b), connecting the 2 subunits; these bridges are implicated in subunit movement. Contacts the tRNAs in the A and P-sites. In Mycobacterium sp. (strain JLS), this protein is Small ribosomal subunit protein uS13.